The primary structure comprises 363 residues: Sorting nexin-21 (363 aa).

Over residues 1–11 (MASRLLHRLRH) the composition is skewed to basic residues. Residues 1 to 99 (MASRLLHRLR…PPPDGQRSSQ (99 aa)) are disordered. Over residues 12 to 28 (ALASDGPGEAAAGPEAE) the composition is skewed to low complexity. The segment covering 46 to 56 (SRLSGTLSFTS) has biased composition (polar residues). A compositionally biased stretch (acidic residues) spans 57–71 (AEDDPDDEDEDDEAG). The PX domain occupies 119–236 (QRLLFEVTSA…DFFVLPELRR (118 aa)). Positions 161, 163, 188, and 202 each coordinate a 1,2-diacyl-sn-glycero-3-phospho-(1D-myo-inositol-3-phosphate).

This sequence belongs to the sorting nexin family. Monomer.

The protein localises to the cytoplasmic vesicle membrane. It localises to the early endosome membrane. Binds to membranes enriched in phosphatidylinositol 3-phosphate (PtdIns(P3)) and phosphatidylinositol 4,5-bisphosphate. May be involved in several stages of intracellular trafficking. The sequence is that of Sorting nexin-21 from Mus musculus (Mouse).